We begin with the raw amino-acid sequence, 1798 residues long: DNA polymerase II large subunit (1798 aa).

Residues 286–309 (EKGKSSEENKDESKAEDTGTESVA) are disordered. The DOD-type homing endonuclease domain maps to 1184–1319 (VVGYYLAEGY…ETLLLAKFGI (136 aa)). Positions 1699–1798 (TGHSNGKNGY…GISLDEFFGS (100 aa)) are disordered. Residues 1714–1731 (GKNGKASKKSGSLASKLS) are compositionally biased toward low complexity. Residues 1733–1753 (KGKEPSKKKESAKPKRSEKVK) show a composition bias toward basic and acidic residues.

The protein belongs to the archaeal DNA polymerase II family. As to quaternary structure, heterodimer of a large subunit and a small subunit. In terms of processing, this protein undergoes a protein self splicing that involves a post-translational excision of the intervening region (intein) followed by peptide ligation.

The catalysed reaction is DNA(n) + a 2'-deoxyribonucleoside 5'-triphosphate = DNA(n+1) + diphosphate. It catalyses the reaction Exonucleolytic cleavage in the 3'- to 5'-direction to yield nucleoside 5'-phosphates.. Possesses two activities: a DNA synthesis (polymerase) and an exonucleolytic activity that degrades single-stranded DNA in the 3'- to 5'-direction. Has a template-primer preference which is characteristic of a replicative DNA polymerase. This chain is DNA polymerase II large subunit (polC), found in Thermococcus kodakarensis (strain ATCC BAA-918 / JCM 12380 / KOD1) (Pyrococcus kodakaraensis (strain KOD1)).